The sequence spans 307 residues: Acyl transferase (307 aa).

Active-site charge relay system residues include S116, D213, and H243.

This sequence belongs to the LuxD family.

It functions in the pathway lipid metabolism; fatty acid reduction for biolumincescence. Functionally, acyl transferase is part of the fatty acid reductase system required for aldehyde biosynthesis; it produces fatty acids for the luminescent reaction. The protein is Acyl transferase of Aliivibrio fischeri (strain MJ11) (Vibrio fischeri).